We begin with the raw amino-acid sequence, 732 residues long: Catalase-peroxidase (732 aa).

The tract at residues 1–24 is disordered; sequence MDAKTDDNSAGKCPVAHGSAGRTN. Residues 96-219 constitute a cross-link (tryptophyl-tyrosyl-methioninium (Trp-Tyr) (with M-245)); that stretch reads WHSAGTYRIA…LGAVQMGLIY (124 aa). Histidine 97 (proton acceptor) is an active-site residue. The segment at residues 219 to 245 is a cross-link (tryptophyl-tyrosyl-methioninium (Tyr-Met) (with W-96)); sequence YVNPEGPNGNPDPLAAARDIRDTFARM. Histidine 260 serves as a coordination point for heme b.

This sequence belongs to the peroxidase family. Peroxidase/catalase subfamily. In terms of assembly, homodimer or homotetramer. It depends on heme b as a cofactor. Post-translationally, formation of the three residue Trp-Tyr-Met cross-link is important for the catalase, but not the peroxidase activity of the enzyme.

It catalyses the reaction H2O2 + AH2 = A + 2 H2O. It carries out the reaction 2 H2O2 = O2 + 2 H2O. Bifunctional enzyme with both catalase and broad-spectrum peroxidase activity. In Mesorhizobium japonicum (strain LMG 29417 / CECT 9101 / MAFF 303099) (Mesorhizobium loti (strain MAFF 303099)), this protein is Catalase-peroxidase.